The chain runs to 79 residues: UPF0180 protein BcerKBAB4_1316 (79 aa).

The protein belongs to the UPF0180 family.

The sequence is that of UPF0180 protein BcerKBAB4_1316 from Bacillus mycoides (strain KBAB4) (Bacillus weihenstephanensis).